A 217-amino-acid polypeptide reads, in one-letter code: Cytidylate kinase (217 aa).

10 to 18 (GPAGAGKST) serves as a coordination point for ATP.

Belongs to the cytidylate kinase family. Type 1 subfamily.

The protein resides in the cytoplasm. It catalyses the reaction CMP + ATP = CDP + ADP. The catalysed reaction is dCMP + ATP = dCDP + ADP. This is Cytidylate kinase from Clostridium botulinum (strain Langeland / NCTC 10281 / Type F).